The sequence spans 192 residues: MNNKIIEALIYIQGEEGLSSEQLQKVLKSESISSARALLKVFKEKWNNEQHGIKVEEFNDVYKFATIKDVKDYVSELVTIIKKQRLSNAAIEVAGIVAYKQPISKSQINKIRGVASEIVVNTLLIKGIIEEVGIAQTPGNPILYGVTAKFYDYFKIKSLHELPNLKEFDDTGEYESIEDFDLYSSQREDQDE.

The protein belongs to the ScpB family. As to quaternary structure, homodimer. Homodimerization may be required to stabilize the binding of ScpA to the Smc head domains. Component of a cohesin-like complex composed of ScpA, ScpB and the Smc homodimer, in which ScpA and ScpB bind to the head domain of Smc. The presence of the three proteins is required for the association of the complex with DNA.

The protein localises to the cytoplasm. Participates in chromosomal partition during cell division. May act via the formation of a condensin-like complex containing Smc and ScpA that pull DNA away from mid-cell into both cell halves. This is Segregation and condensation protein B from Mycoplasma mobile (strain ATCC 43663 / 163K / NCTC 11711) (Mesomycoplasma mobile).